A 542-amino-acid polypeptide reads, in one-letter code: MAAKEIKFSTEAREKMLRGVDILANAVKATLGPKGRNVVIDKSFGAPRITKDGVSVAKEIELEDKFENMGAQMVREVASKTSDIAGDGTTTATVLAQAIVKEGAKAVTSGMNPMDLKRGIDLAVAAIVAELKANARKISNNSEIAQVGTISANGDAEIGRFLAEAMEKVGNDGVITVEEAKTAETELEVVEGMQFDRGYLSPYFVTNADKMRVEFEDPYILIHEKKLSNLQSMLPVLEAVVQSSKPLLIIAEDVEGEALATLVVNKLRGGLKIAAVKAPGFGDRRKAMLEDIAILTAGTVISEDLGIKLESVTLDMLGRAKKVSIEKENTTIVDGSGAKTDIEGRVAQIKAQIEETTSDYDREKLQERLAKLAGGVAVIRVGGSTEVEVKEKKDRVDDALHATRAAVEEGILPGGGVALLRAVKALDAVKTANGDQRVGVDIVRRAVEAPARQIAENAGAEGSVIVGKLREKSEFSYGWNAQTGEYGDLYAQGVIDPAKVVRTALQDAASIAGLLVTTEAMIAEKPKKDAPPPMPAGPGMDF.

ATP-binding positions include 30–33 (TLGP), K51, 87–91 (DGTTT), G415, and D496.

Belongs to the chaperonin (HSP60) family. As to quaternary structure, forms a cylinder of 14 subunits composed of two heptameric rings stacked back-to-back. Interacts with the co-chaperonin GroES.

Its subcellular location is the cytoplasm. The catalysed reaction is ATP + H2O + a folded polypeptide = ADP + phosphate + an unfolded polypeptide.. Its function is as follows. Together with its co-chaperonin GroES, plays an essential role in assisting protein folding. The GroEL-GroES system forms a nano-cage that allows encapsulation of the non-native substrate proteins and provides a physical environment optimized to promote and accelerate protein folding. This chain is Chaperonin GroEL 2, found in Rhizobium leguminosarum.